The chain runs to 228 residues: Probable endo-1,4-beta-xylanase A (228 aa).

The first 18 residues, 1–18 (MVSFSYLLLACSAIGALA), serve as a signal peptide directing secretion. N29 carries an N-linked (GlcNAc...) asparagine glycan. The region spanning 40-228 (AGTPSSTGWN…SSGSASITVY (189 aa)) is the GH11 domain. Catalysis depends on E124, which acts as the Nucleophile. The Proton donor role is filled by E215.

Belongs to the glycosyl hydrolase 11 (cellulase G) family.

The protein localises to the secreted. It carries out the reaction Endohydrolysis of (1-&gt;4)-beta-D-xylosidic linkages in xylans.. It functions in the pathway glycan degradation; xylan degradation. Its function is as follows. Endo-1,4-beta-xylanase involved in the hydrolysis of xylan, a major structural heterogeneous polysaccharide found in plant biomass representing the second most abundant polysaccharide in the biosphere, after cellulose. The protein is Probable endo-1,4-beta-xylanase A (xlnA) of Aspergillus fumigatus (strain CBS 144.89 / FGSC A1163 / CEA10) (Neosartorya fumigata).